We begin with the raw amino-acid sequence, 417 residues long: Inner membrane transport protein YnfM (417 aa).

Residues 1 to 22 (MSRTTTVDGAPASDTDKQSISQ) form a disordered region. The Periplasmic segment spans residues 1–38 (MSRTTTVDGAPASDTDKQSISQPNQFIKRGTPQFMRVT). The helical transmembrane segment at 39-59 (LALFSAGLATFALLYCVQPIL) threads the bilayer. The Cytoplasmic segment spans residues 60 to 73 (PVLSQEFGLTPANS). The chain crosses the membrane as a helical span at residues 74-94 (SISLSISTAMLAIGLLFTGPL). Residues 95–101 (SDAIGRK) are Periplasmic-facing. Residues 102–122 (PVMVTALLLASICTLLSTMMT) form a helical membrane-spanning segment. At 123–125 (SWH) the chain is on the cytoplasmic side. A helical transmembrane segment spans residues 126–146 (GILIMRALIGLSLSGVAAVGM). Residues 147–152 (TYLSEE) are Periplasmic-facing. The helical transmembrane segment at 153–173 (IHPSFVAFSMGLYISGNSIGG) threads the bilayer. Over 174–190 (MSGRLISGVFTDFFNWR) the chain is Cytoplasmic. A helical membrane pass occupies residues 191 to 211 (IALAAIGCFALASALMFWKIL). Residues 212–241 (PESRHFRPTSLRPKTLFINFRLHWRDRGLP) are Periplasmic-facing. A helical membrane pass occupies residues 242–262 (LLFAEGFLLMGSFVTLFNYIG). Residues 263 to 264 (YR) are Cytoplasmic-facing. The chain crosses the membrane as a helical span at residues 265-285 (LMLSPWHVSQAVVGLLSLAYL). Topologically, residues 286-315 (TGTWSSPKAGTMTTRYGRGPVMLFSTGVML) are periplasmic. A helical membrane pass occupies residues 316–336 (FGLLMTLFSSLWLIFAGMLLF). Over 337 to 364 (SAGFFAAHSVASSWIGPRAKRAKGQASS) the chain is Cytoplasmic. The helical transmembrane segment at 365–385 (LYLFSYYLGSSIAGTLGGVFW) threads the bilayer. Over 386 to 387 (HN) the chain is Periplasmic. A helical transmembrane segment spans residues 388-408 (YGWNGVGAFIALMLVIALLVG). Residues 409 to 417 (TRLHRRLHA) are Cytoplasmic-facing.

This sequence belongs to the major facilitator superfamily.

Its subcellular location is the cell inner membrane. This Escherichia coli (strain K12) protein is Inner membrane transport protein YnfM (ynfM).